The chain runs to 249 residues: MRVVTAKSIKKNRYNRMFAEEDLYSMLEEMGNTQQMINKFQKKRITQTILLSFFGLLLGLFFTSWCYLLALGLPFFFYRSKYTHVTKTYNAFKFERHLNFSKFTRLLIPYLKESGESTSLYQVFRKILNRMDNPVDKNSLAKLMSEMTDKPNDIQPFTDYAMRSSGSDMSINIMQTIYDFQQNSSDTNVINELGQMASAELQRAIDEIIAFKLRRFNFFPTKIVMSSFILVVGFAAAVLVHHLSSINLS.

The next 2 membrane-spanning stretches (helical) occupy residues 49–69 (ILLS…CYLL) and 223–243 (IVMS…VHHL).

The protein localises to the cell membrane. This is an uncharacterized protein from Bacillus anthracis.